The following is a 94-amino-acid chain: Large ribosomal subunit protein uL23 (94 aa).

This sequence belongs to the universal ribosomal protein uL23 family. As to quaternary structure, part of the 50S ribosomal subunit. Contacts protein L29, and trigger factor when it is bound to the ribosome.

In terms of biological role, one of the early assembly proteins it binds 23S rRNA. One of the proteins that surrounds the polypeptide exit tunnel on the outside of the ribosome. Forms the main docking site for trigger factor binding to the ribosome. This Lysinibacillus sphaericus (strain C3-41) protein is Large ribosomal subunit protein uL23.